Consider the following 1058-residue polypeptide: Kinesin-like protein KIN-5D (1058 aa).

Residues 1 to 43 are disordered; sequence MDSIQQRRGGIVSLSPAQTPRSSDKSARESRSSESNSTNRNDK. Residues 22–32 are compositionally biased toward basic and acidic residues; the sequence is SSDKSARESRS. One can recognise a Kinesin motor domain in the interval 48 to 390; it reads NVQVILRCRP…LDYAHRAKNI (343 aa). Residue 134 to 141 coordinates ATP; it reads GQTGTGKT. Positions 438–517 form a coiled coil; the sequence is QEEAEKKAMA…QANATIKEKE (80 aa).

Belongs to the TRAFAC class myosin-kinesin ATPase superfamily. Kinesin family. KIN-5/BimC subfamily.

The protein localises to the cytoplasm. It localises to the cytoskeleton. It is found in the spindle. Responsible for microtubule translocation. May be important for the organization of phragmoplast-specific arrays of microtubules. Plays an essential role in stabilizing the mitotic spindle. Required during mitotic cytokinesis. This is Kinesin-like protein KIN-5D from Arabidopsis thaliana (Mouse-ear cress).